Reading from the N-terminus, the 630-residue chain is Sodium-dependent serotonin transporter (630 aa).

Polar residues-rich tracts occupy residues 1-11 (METTPLNSQKV) and 42-55 (QISN…STSA). Positions 1 to 63 (METTPLNSQK…SAGDEAPHST (63 aa)) are disordered. The Cytoplasmic segment spans residues 1 to 87 (METTPLNSQK…ERETWGKKMD (87 aa)). A Phosphotyrosine modification is found at Y47. A helical transmembrane segment spans residues 88–112 (FLLSVIGYAVDLGNIWRFPYICYQN). Na(+) contacts are provided by G94, A96, V97, D98, and N101. Serotonin is bound at residue D98. Over 113–115 (GGG) the chain is Extracellular. The chain crosses the membrane as a helical span at residues 116–135 (AFLLPYTIMAIFGGIPLFYM). The Cytoplasmic portion of the chain corresponds to 136-160 (ELALGQYHRNGCISIWKKICPIFKG). Y142 carries the post-translational modification Phosphotyrosine. A helical membrane pass occupies residues 161–186 (IGYAICIIAFYIASYYNTIIAWALYY). Over 187 to 252 (LISSFTDQLP…KGLQDLGTIS (66 aa)) the chain is Extracellular. C200 and C209 are disulfide-bonded. 2 N-linked (GlcNAc...) asparagine glycosylation sites follow: N208 and N217. The chain crosses the membrane as a helical span at residues 253–271 (WQLALCIMLIFTIIYFSIW). At 272-277 (KGVKTS) the chain is on the cytoplasmic side. The residue at position 276 (T276) is a Phosphothreonine. A helical membrane pass occupies residues 278-297 (GKVVWVTATFPYIVLSVLLV). The Extracellular portion of the chain corresponds to 298–324 (RGATLPGAWRGVVFYLKPNWQKLLETG). The chain crosses the membrane as a helical span at residues 325–347 (VWVDAAAQIFFSLGPGFGVLLAF). Position 336 (S336) interacts with Na(+). Over 348–360 (ASYNKFNNNCYQD) the chain is Cytoplasmic. The helical transmembrane segment at 361 to 380 (ALVTSVVNCMTSFVSGFVIF) threads the bilayer. N368 is a Na(+) binding site. Residues 381 to 421 (TVLGYMAEMRNEDVSEVAKDAGPSLLFITYAEAIANMPAST) are Extracellular-facing. A helical transmembrane segment spans residues 422–443 (FFAIIFFLMLITLGLDSTFAGL). Residues L434, D437, and S438 each contribute to the Na(+) site. Serotonin is bound at residue T439. At 444-463 (EGVITAVLDEFPHIWAKRRE) the chain is on the cytoplasmic side. A helical membrane pass occupies residues 464-483 (WFVLIVVITCILGSLLTLTS). The Extracellular segment spans residues 484–494 (GGAYVVTLLEE). Residues E494 and Y495 each coordinate serotonin. A helical membrane pass occupies residues 495–516 (YATGPAVLTVALIEAVVVSWFY). The Cytoplasmic portion of the chain corresponds to 517–538 (GITQFCSDVKEMLGFSPGWFWR). The chain crosses the membrane as a helical span at residues 539 to 558 (ICWVAISPLFLLFIICSFLM). Residues F556 and S559 each coordinate serotonin. Over 559 to 574 (SPPQLRLFQYNYPHWS) the chain is Extracellular. A helical membrane pass occupies residues 575-595 (IILGYCIGTSSVICIPIYIIY). Residues 596–630 (RLISTPGTLKERIIKSITPETPTEIPCGDIRMNAV) lie on the Cytoplasmic side of the membrane. Residues 616–624 (TPTEIPCGD) are interaction with RAB4A.

The protein belongs to the sodium:neurotransmitter symporter (SNF) (TC 2.A.22) family. SLC6A4 subfamily. In terms of assembly, monomer or homooligomer. Interacts (via C-terminus) with SCAMP2; the interaction is direct and retains transporter molecules intracellularly. Interacts with filamentous actin and STX1A. Interacts (via the N-terminus) with STX1A (via the H3 domain); this interaction regulates SLC4A6 channel conductance. Interacts with SEC23A, SEC24C and PATJ. Interacts with NOS1; the interaction may diminish the cell surface localization of SERT in the brain and, correspondingly, reduce serotonin reuptake. Interacts with TGFB1I1. Interacts with ITGAV:ITGB3. Interacts (via C-terminus) with ITGB3; this interaction regulates SLC6A4 trafficking. Post-translationally, phosphorylation at Thr-276 increases 5-HT uptake and is required for cGMP-mediated SERT regulation. In terms of tissue distribution, expressed in the lung, midbrain and brainstem regions. Expressed in brainstem raphe neurons.

It localises to the cell membrane. The protein resides in the endomembrane system. The protein localises to the endosome membrane. Its subcellular location is the synapse. It is found in the cell junction. It localises to the focal adhesion. The protein resides in the cell projection. The protein localises to the neuron projection. It carries out the reaction serotonin(out) + K(+)(in) + Na(+)(out) + H(+)(in) = serotonin(in) + K(+)(out) + Na(+)(in) + H(+)(out). Its function is as follows. Serotonin transporter that cotransports serotonin with one Na(+) ion in exchange for one K(+) ion and possibly one proton in an overall electroneutral transport cycle. Transports serotonin across the plasma membrane from the extracellular compartment to the cytosol thus limiting serotonin intercellular signaling. Essential for serotonin homeostasis in the central nervous system. In the developing somatosensory cortex, acts in glutamatergic neurons to control serotonin uptake and its trophic functions accounting for proper spatial organization of cortical neurons and elaboration of sensory circuits. In the mature cortex, acts primarily in brainstem raphe neurons to mediate serotonin uptake from the synaptic cleft back into the pre-synaptic terminal thus terminating serotonin signaling at the synapse. Modulates mucosal serotonin levels in the gastrointestinal tract through uptake and clearance of serotonin in enterocytes. Required for enteric neurogenesis and gastrointestinal reflexes. Regulates blood serotonin levels by ensuring rapid high affinity uptake of serotonin from plasma to platelets, where it is further stored in dense granules via vesicular monoamine transporters and then released upon stimulation. Mechanistically, the transport cycle starts with an outward-open conformation having Na1(+) and Cl(-) sites occupied. The binding of a second extracellular Na2(+) ion and serotonin substrate leads to structural changes to outward-occluded to inward-occluded to inward-open, where the Na2(+) ion and serotonin are released into the cytosol. Binding of intracellular K(+) ion induces conformational transitions to inward-occluded to outward-open and completes the cycle by releasing K(+) possibly together with a proton bound to Asp-98 into the extracellular compartment. Na1(+) and Cl(-) ions remain bound throughout the transport cycle. Additionally, displays serotonin-induced channel-like conductance for monovalent cations, mainly Na(+) ions. The channel activity is uncoupled from the transport cycle and may contribute to the membrane resting potential or excitability. The polypeptide is Sodium-dependent serotonin transporter (Mus musculus (Mouse)).